The chain runs to 171 residues: Ly6/PLAUR domain-containing protein 6 (171 aa).

A signal peptide spans 1-25 (MEPSPALAWLLLLSLVADCLKAAQS). A UPAR/Ly6 domain is found at 47–141 (FKCFTCEKAA…PRNDTDATFA (95 aa)). Disulfide bonds link cysteine 49–cysteine 77, cysteine 52–cysteine 61, cysteine 70–cysteine 96, cysteine 102–cysteine 121, cysteine 107–cysteine 118, and cysteine 122–cysteine 127. The NxI motif motif lies at 88–90 (NSI). N-linked (GlcNAc...) asparagine glycans are attached at residues asparagine 134 and asparagine 147. Asparagine 147 carries GPI-anchor amidated asparagine lipidation. Positions 148-171 (QTNGHPHCVSVIVSCLWVWLGLTL) are cleaved as a propeptide — removed in mature form.

As to quaternary structure, interacts with nicotinic acetylcholine receptors (nAChRs) including CHRNA3, CHRNA4, CHRNA5, CHRNA6, CHRNA7, CHRNB2 and CHRNB4. Interacts (via NxI motif) with LRP6. As to expression, expressed at high levels in the cortex and cerebellum of the brain, at moderate levels in the lung, kidney, and liver, and at low levels in the heart and prostate (at protein level). Expressed in neurons (at protein level).

The protein localises to the secreted. The protein resides in the cytoplasm. Its subcellular location is the cell membrane. It localises to the synapse. It is found in the synaptosome. The protein localises to the membrane raft. The protein resides in the cell projection. Its subcellular location is the dendrite. It localises to the perikaryon. Functionally, acts as a modulator of nicotinic acetylcholine receptors (nAChRs) function in the brain. Inhibits nicotine-induced Ca(2+) influx through nAChRs. In vitro, specifically inhibits alpha-3:beta-4 and alpha-7 nAChR currents in an allosteric manner. Acts as a positive regulator of Wnt/beta-catenin signaling. The chain is Ly6/PLAUR domain-containing protein 6 (Lypd6) from Rattus norvegicus (Rat).